Consider the following 194-residue polypeptide: UPF0301 protein FTA_1286 (194 aa).

This sequence belongs to the UPF0301 (AlgH) family.

The polypeptide is UPF0301 protein FTA_1286 (Francisella tularensis subsp. holarctica (strain FTNF002-00 / FTA)).